The sequence spans 434 residues: Probable phosphatidylinositol 3,4,5-trisphosphate 3-phosphatase TEP1 (434 aa).

The region spanning 33-255 (KTKNDIGLRL…RYHEFFITHE (223 aa)) is the Phosphatase tensin-type domain. Cysteine 193 acts as the Phosphocysteine intermediate in catalysis.

It carries out the reaction a 1,2-diacyl-sn-glycero-3-phospho-(1D-myo-inositol-3,4,5-trisphosphate) + H2O = a 1,2-diacyl-sn-glycero-3-phospho-(1D-myo-inositol-4,5-bisphosphate) + phosphate. Functionally, may act as a phosphoinositide 3-phosphatase by regulating PtdIns(3,4,5)P3 levels. The chain is Probable phosphatidylinositol 3,4,5-trisphosphate 3-phosphatase TEP1 (TEP1) from Saccharomyces cerevisiae (strain ATCC 204508 / S288c) (Baker's yeast).